Reading from the N-terminus, the 203-residue chain is Proteasome subunit beta 2 (203 aa).

A propeptide spans 1–9 (removed in mature form; by autocatalysis); it reads MGEEVQIGA. Thr-10 functions as the Nucleophile in the catalytic mechanism.

This sequence belongs to the peptidase T1B family. The 20S proteasome core is composed of 14 alpha and 14 beta subunits that assemble into four stacked heptameric rings, resulting in a barrel-shaped structure. The two inner rings, each composed of seven catalytic beta subunits, are sandwiched by two outer rings, each composed of seven alpha subunits. The catalytic chamber with the active sites is on the inside of the barrel. Has a gated structure, the ends of the cylinder being occluded by the N-termini of the alpha-subunits. Is capped at one or both ends by the proteasome regulatory ATPase, PAN.

It is found in the cytoplasm. It carries out the reaction Cleavage of peptide bonds with very broad specificity.. With respect to regulation, the formation of the proteasomal ATPase PAN-20S proteasome complex, via the docking of the C-termini of PAN into the intersubunit pockets in the alpha-rings, triggers opening of the gate for substrate entry. Interconversion between the open-gate and close-gate conformations leads to a dynamic regulation of the 20S proteasome proteolysis activity. In terms of biological role, component of the proteasome core, a large protease complex with broad specificity involved in protein degradation. This Pyrobaculum aerophilum (strain ATCC 51768 / DSM 7523 / JCM 9630 / CIP 104966 / NBRC 100827 / IM2) protein is Proteasome subunit beta 2.